The sequence spans 429 residues: GDP-fucose protein O-fucosyltransferase 2 (429 aa).

An N-terminal signal peptide occupies residues 1-21 (MATLSFVFLLLGAVSWPPASA). 53–57 (PEGFN) serves as a coordination point for GDP-beta-L-fucose. Glutamate 54 (proton acceptor) is an active-site residue. Cysteine 161 and cysteine 192 are oxidised to a cystine. Residues asparagine 189, asparagine 209, and asparagine 259 are each glycosylated (N-linked (GlcNAc...) asparagine). GDP-beta-L-fucose contacts are provided by residues 292 to 294 (HLR), aspartate 371, and 388 to 389 (TF). Cysteine 412 and cysteine 419 are joined by a disulfide.

This sequence belongs to the glycosyltransferase 68 family. Isoform A is expressed in fetal liver and peripheral blood lymphocytes. Isoform B is expressed in spleen, lung, testis, bone marrow, thymus, pancreas, prostate, fetal brain, fetal liver and fetal kidney. Isoform C is expressed in brain, heart, spleen, liver, lung, stomach, testis, placenta, skin, thymus, pancreas, mammary gland, prostate, fetal brain, fetal liver and fetal heart.

It is found in the endoplasmic reticulum. The protein resides in the golgi apparatus. The enzyme catalyses L-seryl-[protein] + GDP-beta-L-fucose = 3-O-(alpha-L-fucosyl)-L-seryl-[protein] + GDP + H(+). It catalyses the reaction L-threonyl-[protein] + GDP-beta-L-fucose = 3-O-(alpha-L-fucosyl)-L-threonyl-[protein] + GDP + H(+). Its pathway is protein modification; protein glycosylation. Inhibited by EDTA and by Zn(2+). Its function is as follows. Catalyzes the reaction that attaches fucose through an O-glycosidic linkage to a conserved serine or threonine residue in the consensus sequence C1-X-X-S/T-C2 of thrombospondin type I repeats (TSRs) where C1 and C2 are the first and second cysteines of the repeat, respectively. O-fucosylates members of several protein families including the ADAMTS, the thrombospondin (TSP) and spondin families. Required for the proper secretion of ADAMTS family members such as ADAMTSL1 and ADAMTS13. The O-fucosylation of TSRs is also required for restricting epithelial to mesenchymal transition (EMT), maintaining the correct patterning of mesoderm and localization of the definite endoderm. This is GDP-fucose protein O-fucosyltransferase 2 (POFUT2) from Homo sapiens (Human).